Here is a 143-residue protein sequence, read N- to C-terminus: Ribosome maturation factor RimP (143 aa).

The protein belongs to the RimP family.

It localises to the cytoplasm. In terms of biological role, required for maturation of 30S ribosomal subunits. The sequence is that of Ribosome maturation factor RimP from Borrelia hermsii (strain HS1 / DAH).